Reading from the N-terminus, the 546-residue chain is FAD-dependent monooxygenase (546 aa).

A signal peptide spans 1–17; that stretch reads MYDVIVVGAGWCGLAAA. Residue isoleucine 106 participates in FAD binding. 2 N-linked (GlcNAc...) asparagine glycosylation sites follow: asparagine 239 and asparagine 343.

This sequence belongs to the FAD-binding monooxygenase family. Requires FAD as cofactor.

The protein operates within antifungal biosynthesis. Its function is as follows. FAD-dependent monooxygenase; part of the gene cluster that mediates the biosynthesis of the tetrahydropyranyl antifungal agent lanomycin that acts as an inhibitor of CYP51 and blocks the ergosterol biosynthesis. The biosynthesis probably begins with the formation of an hexaketide, followed by methionine mediated alkylation of C-2 and C-6, and methylation of the reduced C-3 oxygen, pyran forming reductive ring closure, oxygenation of C-4, beta-keto reduction, enoyl reduction and dehydration of the remaining oxygens, and finally, acylation with glycine to complete the biosynthesis. The sequence is that of FAD-dependent monooxygenase from Pyrenophora dematioidea (Helminthosporium dematioideum).